The primary structure comprises 337 residues: Phosphate acyltransferase (337 aa).

It belongs to the PlsX family. Homodimer. Probably interacts with PlsY.

The protein resides in the cytoplasm. The enzyme catalyses a fatty acyl-[ACP] + phosphate = an acyl phosphate + holo-[ACP]. It participates in lipid metabolism; phospholipid metabolism. Catalyzes the reversible formation of acyl-phosphate (acyl-PO(4)) from acyl-[acyl-carrier-protein] (acyl-ACP). This enzyme utilizes acyl-ACP as fatty acyl donor, but not acyl-CoA. The protein is Phosphate acyltransferase of Moritella marina (Vibrio marinus).